Reading from the N-terminus, the 98-residue chain is Co-chaperonin GroES 3 (98 aa).

Belongs to the GroES chaperonin family. Heptamer of 7 subunits arranged in a ring. Interacts with the chaperonin GroEL.

It localises to the cytoplasm. Together with the chaperonin GroEL, plays an essential role in assisting protein folding. The GroEL-GroES system forms a nano-cage that allows encapsulation of the non-native substrate proteins and provides a physical environment optimized to promote and accelerate protein folding. GroES binds to the apical surface of the GroEL ring, thereby capping the opening of the GroEL channel. The sequence is that of Co-chaperonin GroES 3 from Mesorhizobium japonicum (strain LMG 29417 / CECT 9101 / MAFF 303099) (Mesorhizobium loti (strain MAFF 303099)).